The following is a 166-amino-acid chain: 6,7-dimethyl-8-ribityllumazine synthase (166 aa).

5-amino-6-(D-ribitylamino)uracil contacts are provided by residues Phe-24, 58–60, and 82–84; these read ALE and AVI. 87–88 contacts (2S)-2-hydroxy-3-oxobutyl phosphate; the sequence is ET. The Proton donor role is filled by His-90. A 5-amino-6-(D-ribitylamino)uracil-binding site is contributed by Asn-115. (2S)-2-hydroxy-3-oxobutyl phosphate is bound at residue Arg-129.

This sequence belongs to the DMRL synthase family.

It carries out the reaction (2S)-2-hydroxy-3-oxobutyl phosphate + 5-amino-6-(D-ribitylamino)uracil = 6,7-dimethyl-8-(1-D-ribityl)lumazine + phosphate + 2 H2O + H(+). The protein operates within cofactor biosynthesis; riboflavin biosynthesis; riboflavin from 2-hydroxy-3-oxobutyl phosphate and 5-amino-6-(D-ribitylamino)uracil: step 1/2. Its function is as follows. Catalyzes the formation of 6,7-dimethyl-8-ribityllumazine by condensation of 5-amino-6-(D-ribitylamino)uracil with 3,4-dihydroxy-2-butanone 4-phosphate. This is the penultimate step in the biosynthesis of riboflavin. The protein is 6,7-dimethyl-8-ribityllumazine synthase of Ralstonia pickettii (strain 12J).